The primary structure comprises 193 residues: MQLFDLWTDLLDLLTIVAGPTAVGKGTVISHLRKCHPQVKVSISATTREPRDSERDGIDYYFVTDEVFDCMVRSGQMLEWATVHGLHKYGTPKEEVERLLHTGQPVILEIDLQGMRKVRKILPAVRTVILLPPAWDDLICRIKRRGSESQDEIDARLATAKKELEAIGEFDYKIVNADVEIAANELWLAMNRV.

In terms of domain architecture, Guanylate kinase-like spans 12–191 (DLLTIVAGPT…AANELWLAMN (180 aa)). 19–26 (GPTAVGKG) serves as a coordination point for ATP.

The protein belongs to the guanylate kinase family.

It is found in the cytoplasm. The enzyme catalyses GMP + ATP = GDP + ADP. In terms of biological role, essential for recycling GMP and indirectly, cGMP. The polypeptide is Guanylate kinase (Tropheryma whipplei (strain TW08/27) (Whipple's bacillus)).